A 335-amino-acid polypeptide reads, in one-letter code: MQSFTDTPDFQLTTKNTPSVVMTSDLRKVYRTGFWMNQKVVSLKGCSLTVYQGETFGLLGPNGAGKTTLLKLLLGIIRPSGGKGLLLGQPLGDRHIKQRVGYLSENPYLYEYLTGWEFLELAAGLFEIPASVQRQRIPELLDLVGLSVADAQKKQMRRYSKGMLQRVGMAQALINDPELIFLDEPMSGLDPLGRYRMREIILSLKAAGKTIFFNSHILSEVEKICDRIAILSQGELVCSGSLDELLGSQNTYHVQGQNGDWEILKKWLANLVYEPDGYWQGTLQEDYYDFLASVRLMGGRIISMNLSRQSLEEFFINQIQKQDTSLHEVIDQSEV.

Positions 21-258 constitute an ABC transporter domain; that stretch reads VMTSDLRKVY…QNTYHVQGQN (238 aa). 60–67 serves as a coordination point for ATP; it reads GPNGAGKT.

It belongs to the ABC transporter superfamily.

This is an uncharacterized protein from Nostoc sp. (strain PCC 7120 / SAG 25.82 / UTEX 2576).